The following is a 327-amino-acid chain: Biotin synthase (327 aa).

In terms of domain architecture, Radical SAM core spans 51 to 278 (QTIQLSTLMS…KSYVRLSAGR (228 aa)). Positions 66, 70, and 73 each coordinate [4Fe-4S] cluster. [2Fe-2S] cluster is bound by residues cysteine 110, cysteine 141, cysteine 201, and arginine 273.

This sequence belongs to the radical SAM superfamily. Biotin synthase family. As to quaternary structure, homodimer. The cofactor is [4Fe-4S] cluster. Requires [2Fe-2S] cluster as cofactor.

The catalysed reaction is (4R,5S)-dethiobiotin + (sulfur carrier)-SH + 2 reduced [2Fe-2S]-[ferredoxin] + 2 S-adenosyl-L-methionine = (sulfur carrier)-H + biotin + 2 5'-deoxyadenosine + 2 L-methionine + 2 oxidized [2Fe-2S]-[ferredoxin]. The protein operates within cofactor biosynthesis; biotin biosynthesis; biotin from 7,8-diaminononanoate: step 2/2. Functionally, catalyzes the conversion of dethiobiotin (DTB) to biotin by the insertion of a sulfur atom into dethiobiotin via a radical-based mechanism. In Histophilus somni (strain 2336) (Haemophilus somnus), this protein is Biotin synthase.